A 528-amino-acid chain; its full sequence is Glucosidase 2 subunit beta (528 aa).

A signal peptide spans 1–14 (MLLPLLLLLPMCWA). The residue at position 24 (Ser24) is a Phosphoserine; by FAM20C. 2 LDL-receptor class A domains span residues 37 to 71 (FTCLDGSATIPFDQVNDDYCDCKDGSDEPGTAACP) and 72 to 113 (NGSF…VICE). 2 disulfides stabilise this stretch: Cys39/Cys58 and Cys56/Cys70. Asp49 provides a ligand contact to substrate. Positions 50, 53, 55, 57, 63, and 64 each coordinate Ca(2+). Residue Asp53 participates in substrate binding. A glycan (N-linked (GlcNAc...) asparagine) is linked at Asn72. 3 cysteine pairs are disulfide-bonded: Cys77–Cys99, Cys97–Cys112, and Cys100–Cys116. At Ser89 the chain carries Phosphoserine; by PKC. Ca(2+) contacts are provided by Arg91, Asp94, Val96, Asp98, Asp104, and Glu105. At Lys166 the chain carries N6-succinyllysine. Ser168 carries the phosphoserine; by FAM20C modification. EF-hand domains lie at 209-244 (QEQELAADAFKELDDDMDGTVSVTELQTHPELDTDG) and 245-290 (DGAL…TDLP). Residues Asp222, Asp224, Asp226, Thr228, and Glu233 each contribute to the Ca(2+) site. 2 disordered regions span residues 234–266 (LQTHPELDTDGDGALSEAEAQALLSGDTQTDAT) and 281–357 (RSEA…DKMP). Positions 247 to 258 (ALSEAEAQALLS) are enriched in low complexity. A compositionally biased stretch (acidic residues) spans 312 to 337 (TEEEEEEEEEEEEEAEEEEEEEDSEE). Over residues 338 to 348 (APPPLSPPQPA) the composition is skewed to pro residues. Phosphoserine; by PKC is present on residues Ser383 and Ser390. The 102-residue stretch at 413 to 514 (SQCYELTTNE…ELMTPAACPE (102 aa)) folds into the MRH domain. The cysteines at positions 415 and 428 are disulfide-linked. Ser434 is modified (phosphoserine; by PKC). 2 cysteine pairs are disulfide-bonded: Cys471/Cys500 and Cys485/Cys512. The N-linked (GlcNAc...) asparagine glycan is linked to Asn476. The short motif at 525 to 528 (HDEL) is the Prevents secretion from ER element.

In terms of assembly, heterodimer of a catalytic alpha subunit (GANAB) and a beta subunit (PRKCSH). Binds glycosylated PTPRC.

The protein localises to the endoplasmic reticulum. Its pathway is glycan metabolism; N-glycan metabolism. Regulatory subunit of glucosidase II that cleaves sequentially the 2 innermost alpha-1,3-linked glucose residues from the Glc(2)Man(9)GlcNAc(2) oligosaccharide precursor of immature glycoproteins. Required for efficient PKD1/Polycystin-1 biogenesis and trafficking to the plasma membrane of the primary cilia. The sequence is that of Glucosidase 2 subunit beta from Homo sapiens (Human).